Reading from the N-terminus, the 254-residue chain is Leucyl/phenylalanyl-tRNA--protein transferase (254 aa).

Belongs to the L/F-transferase family.

The protein resides in the cytoplasm. The catalysed reaction is N-terminal L-lysyl-[protein] + L-leucyl-tRNA(Leu) = N-terminal L-leucyl-L-lysyl-[protein] + tRNA(Leu) + H(+). It carries out the reaction N-terminal L-arginyl-[protein] + L-leucyl-tRNA(Leu) = N-terminal L-leucyl-L-arginyl-[protein] + tRNA(Leu) + H(+). The enzyme catalyses L-phenylalanyl-tRNA(Phe) + an N-terminal L-alpha-aminoacyl-[protein] = an N-terminal L-phenylalanyl-L-alpha-aminoacyl-[protein] + tRNA(Phe). In terms of biological role, functions in the N-end rule pathway of protein degradation where it conjugates Leu, Phe and, less efficiently, Met from aminoacyl-tRNAs to the N-termini of proteins containing an N-terminal arginine or lysine. This is Leucyl/phenylalanyl-tRNA--protein transferase from Burkholderia ambifaria (strain MC40-6).